A 290-amino-acid polypeptide reads, in one-letter code: 4-hydroxy-tetrahydrodipicolinate synthase (290 aa).

Position 44 (threonine 44) interacts with pyruvate. Tyrosine 132 functions as the Proton donor/acceptor in the catalytic mechanism. Lysine 160 acts as the Schiff-base intermediate with substrate in catalysis. Isoleucine 202 lines the pyruvate pocket.

The protein belongs to the DapA family. Homotetramer; dimer of dimers.

Its subcellular location is the cytoplasm. The enzyme catalyses L-aspartate 4-semialdehyde + pyruvate = (2S,4S)-4-hydroxy-2,3,4,5-tetrahydrodipicolinate + H2O + H(+). It functions in the pathway amino-acid biosynthesis; L-lysine biosynthesis via DAP pathway; (S)-tetrahydrodipicolinate from L-aspartate: step 3/4. In terms of biological role, catalyzes the condensation of (S)-aspartate-beta-semialdehyde [(S)-ASA] and pyruvate to 4-hydroxy-tetrahydrodipicolinate (HTPA). This is 4-hydroxy-tetrahydrodipicolinate synthase from Legionella pneumophila subsp. pneumophila (strain Philadelphia 1 / ATCC 33152 / DSM 7513).